The following is a 450-amino-acid chain: tRNA-2-methylthio-N(6)-dimethylallyladenosine synthase (450 aa).

Residues 14–132 (GEFFIETWGC…FPNYLNEVKK (119 aa)) form the MTTase N-terminal domain. [4Fe-4S] cluster contacts are provided by Cys-23, Cys-59, Cys-93, Cys-169, Cys-173, and Cys-176. The Radical SAM core domain maps to 155-385 (RKNSMKAFVT…VEVVNEISAK (231 aa)). One can recognise a TRAM domain in the interval 388–450 (KAYEGKIEEV…NSFSLTGEEI (63 aa)).

This sequence belongs to the methylthiotransferase family. MiaB subfamily. Monomer. It depends on [4Fe-4S] cluster as a cofactor.

Its subcellular location is the cytoplasm. It carries out the reaction N(6)-dimethylallyladenosine(37) in tRNA + (sulfur carrier)-SH + AH2 + 2 S-adenosyl-L-methionine = 2-methylsulfanyl-N(6)-dimethylallyladenosine(37) in tRNA + (sulfur carrier)-H + 5'-deoxyadenosine + L-methionine + A + S-adenosyl-L-homocysteine + 2 H(+). Functionally, catalyzes the methylthiolation of N6-(dimethylallyl)adenosine (i(6)A), leading to the formation of 2-methylthio-N6-(dimethylallyl)adenosine (ms(2)i(6)A) at position 37 in tRNAs that read codons beginning with uridine. The protein is tRNA-2-methylthio-N(6)-dimethylallyladenosine synthase of Clostridium botulinum (strain Langeland / NCTC 10281 / Type F).